The sequence spans 105 residues: Nucleoid-associated protein ABC0038 (105 aa).

Positions 1-22 (MEMKNMGNMMKQMQKMQKQMMK) are enriched in low complexity. Positions 1–26 (MEMKNMGNMMKQMQKMQKQMMKAQEE) are disordered.

The protein belongs to the YbaB/EbfC family. In terms of assembly, homodimer.

Its subcellular location is the cytoplasm. It localises to the nucleoid. Its function is as follows. Binds to DNA and alters its conformation. May be involved in regulation of gene expression, nucleoid organization and DNA protection. The sequence is that of Nucleoid-associated protein ABC0038 from Shouchella clausii (strain KSM-K16) (Alkalihalobacillus clausii).